Here is a 935-residue protein sequence, read N- to C-terminus: Potassium channel AKT1 (935 aa).

The Cytoplasmic portion of the chain corresponds to 1-106; that stretch reads MARWGAARMA…YDRRYRIWET (106 aa). The chain crosses the membrane as a helical span at residues 107–127; it reads FLIVLVVYSAWVSPFEFGFIP. Residues 128 to 136 lie on the Extracellular side of the membrane; that stretch reads KPTGALATA. The chain crosses the membrane as a helical span at residues 137 to 157; sequence DNVVNAFFAVDIILTFFVAYL. At 158-178 the chain is on the cytoplasmic side; sequence DKMSYMLEDDPKKIAWRYSTT. A helical membrane pass occupies residues 179 to 199; sequence WLVLDVASTIPSEFARRILPS. The Extracellular segment spans residues 200-205; the sequence is KLRSYG. A helical; Voltage-sensor transmembrane segment spans residues 206–226; that stretch reads FFNMLRLWRLRRVSSLFSRLE. Residues 227-240 lie on the Cytoplasmic side of the membrane; that stretch reads KDRHFNYFWVRCAK. A helical transmembrane segment spans residues 241-261; the sequence is LICVTLFAVHCAACFYYLLAD. The Extracellular portion of the chain corresponds to 262-288; sequence RYPVPTSTWIGNYMADFHERSLWIRYV. The segment at residues 289-308 is an intramembrane region (pore-forming); the sequence is TSVYWSITTLTTVGYGDLHA. The Extracellular segment spans residues 309–312; it reads ENTR. Residues 313-333 traverse the membrane as a helical segment; it reads EMIFNIFYMLFNLGLTAYLIG. The Cytoplasmic segment spans residues 334–935; the sequence is NMTNLVVHGT…WDAEKMKGKS (602 aa). 419 to 538 serves as a coordination point for a nucleoside 3',5'-cyclic phosphate; it reads LFQGVSNDLI…TIIMNNLIQF (120 aa). ANK repeat units lie at residues 565–594, 598–627, 631–660, 662–691, 695–724, and 728–757; these read DLPI…DPNE, DGHT…DPNA, EGKV…DLSS, DTGL…DVNR, DGTT…DIDK, and NGWT…ATAS. The segment at 826–854 is disordered; that stretch reads SQAQRETDHPLSRGGLAATGSPNPSSGSR. Polar residues predominate over residues 845–854; sequence GSPNPSSGSR. One can recognise a KHA domain in the interval 859–935; it reads RVTISCPEKG…WDAEKMKGKS (77 aa).

The protein belongs to the potassium channel family. Plant (TC 1.A.1.4) subfamily. As to quaternary structure, the potassium channel is probably a homo- or heterotetrameric complex of pore-forming subunits. In terms of tissue distribution, highly expressed in the epidermis and endodermis of roots, and at lower level in cells of the vasculature and the cortex. Expressed in xylem parenchyma, phloem and mesophyll cells of leaves.

It is found in the membrane. Its function is as follows. Highly selective inward-rectifying potassium channel that mediates potassium uptake by plant roots. This is Potassium channel AKT1 (AKT1) from Oryza sativa subsp. indica (Rice).